The following is a 374-amino-acid chain: All-trans-retinol dehydrogenase [NAD(+)] ADH7 (374 aa).

Positions 47, 68, 98, 101, 104, 112, and 174 each coordinate Zn(2+). NAD(+) is bound by residues 199 to 204, Asp-223, Lys-228, 292 to 294, and Arg-369; these read GLGGVG and VGA.

This sequence belongs to the zinc-containing alcohol dehydrogenase family. Class-IV subfamily. As to quaternary structure, homodimer. It depends on Zn(2+) as a cofactor. In terms of tissue distribution, high expression in the stomach mucosa. Lower expression in eye, thymus, skin and ovary. Very low expression in small intestine, liver and uterus.

It localises to the cytoplasm. It carries out the reaction a primary alcohol + NAD(+) = an aldehyde + NADH + H(+). The catalysed reaction is 10-hydroxydecanoate + NAD(+) = 10-oxodecanoate + NADH + H(+). It catalyses the reaction all-trans-retinol + NAD(+) = all-trans-retinal + NADH + H(+). The enzyme catalyses 9-cis-retinol + NAD(+) = 9-cis-retinal + NADH + H(+). It carries out the reaction all-trans-3,4-didehydroretinol + NAD(+) = all-trans-3,4-didehydroretinal + NADH + H(+). The catalysed reaction is all-trans-4-hydroxyretinol + NAD(+) = all-trans-4-hydroxyretinal + NADH + H(+). It catalyses the reaction all-trans-4-oxoretinol + NAD(+) = all-trans-4-oxoretinal + NADH + H(+). The enzyme catalyses 12-hydroxydodecanoate + NAD(+) = 12-oxododecanoate + NADH + H(+). It carries out the reaction 16-hydroxyhexadecanoate + NAD(+) = 16-oxohexadecanoate + NADH + H(+). The catalysed reaction is hexan-1-ol + NAD(+) = hexanal + NADH + H(+). It catalyses the reaction (E)-hex-2-en-1-ol + NAD(+) = (E)-hex-2-enal + NADH + H(+). The enzyme catalyses (E)-4-hydroxynon-2-en-1-ol + NAD(+) = (E)-4-hydroxynon-2-enal + NADH + H(+). With respect to regulation, retinol oxidation is inhibited by the detergent Tween 80. Ethanol inhibits both all-trans-retinol and 9-cis-retinol oxidation. 13-cis-retinol is an effective competitive inhibitor of the 9-cis-retinol oxidation. All-trans-retinoic acid is a powerful inhibitor of all-trans-retinol oxidation. 13-cis-retinoic acid is a powerful inhibitor of all-trans-retinol oxidation. Cimetidine competitively inhibited ethanol oxidation. Catalyzes the NAD-dependent oxidation of all-trans-retinol, alcohol, aldehyde and omega-hydroxy fatty acids and their derivatives. Oxidizes preferentially all trans-retinol, all-trans-4-hydroxyretinol, 9-cis-retinol, 2-hexenol, and long chain omega-hydroxy fatty acids such as juniperic acid. In vitro can also catalyze the NADH-dependent reduction of all-trans-retinal and aldehydes and their derivatives. Reduces preferentially all trans-retinal, all-trans-4-oxoretinal and hexanal. Catalyzes in the oxidative direction with higher efficiency. Therefore may participate in retinoid metabolism, fatty acid omega-oxidation, and elimination of cytotoxic aldehydes produced by lipid peroxidation. The protein is All-trans-retinol dehydrogenase [NAD(+)] ADH7 (Adh7) of Mus musculus (Mouse).